A 197-amino-acid polypeptide reads, in one-letter code: MTIAAGSQDDKQRRAALWLLACLGVLAIQVLVQHLMGRLWICECGYIKLWEGVVKSSGNSQHLSDWYTPSHVIHGFLFYGLGHLLMRGKPWSARLLLATVIESAWEIAENTPMVINRYRAATISLDYFGDSILNSAMDTLAMAVGFLIASRLPVAATVAIAIVLELFTGYMVRDNLTLNVLMLVWPLDAVKAWQAGV.

The next 2 membrane-spanning stretches (helical) occupy residues 16-36 (ALWLLACLGVLAIQVLVQHLM) and 152-172 (LPVAATVAIAIVLELFTGYMV).

Belongs to the UPF0314 family.

It localises to the cell membrane. The protein is UPF0314 protein R03235 of Rhizobium meliloti (strain 1021) (Ensifer meliloti).